The primary structure comprises 651 residues: LEAF RUST 10 DISEASE-RESISTANCE LOCUS RECEPTOR-LIKE PROTEIN KINASE-like 1.2 (651 aa).

The first 26 residues, 1 to 26 (MNPSTPSLLYTSIFFYFTIIATQTLS), serve as a signal peptide directing secretion. Over 27-264 (LDPKFKACEP…NDKRRRVIVK (238 aa)) the chain is Extracellular. N-linked (GlcNAc...) asparagine glycosylation is found at Asn-88, Asn-114, Asn-130, Asn-136, Asn-155, Asn-193, and Asn-213. Residues 265 to 285 (VLIGASAAVVGLIAASIFWYV) form a helical membrane-spanning segment. The Cytoplasmic portion of the chain corresponds to 286–651 (YHRRKTKSYR…DSVIVKWDSK (366 aa)). Positions 341–613 (FDPSKELGDG…PCMSHVQDTL (273 aa)) constitute a Protein kinase domain. ATP-binding positions include 347 to 355 (LGDGGFGTV) and Lys-369. Tyr-415 is modified (phosphotyrosine). The active-site Proton acceptor is the Asp-465. Ser-498 carries the phosphoserine modification. Thr-499 and Thr-504 each carry phosphothreonine. A Phosphotyrosine modification is found at Tyr-512.

Belongs to the protein kinase superfamily. Ser/Thr protein kinase family.

The protein localises to the cell membrane. It localises to the membrane. The catalysed reaction is L-seryl-[protein] + ATP = O-phospho-L-seryl-[protein] + ADP + H(+). It carries out the reaction L-threonyl-[protein] + ATP = O-phospho-L-threonyl-[protein] + ADP + H(+). Probable receptor-like serine/threonine-protein kinase involved in abscisic acid (ABA) signaling. Acts as a positive regulator of abiotic stress response. This is LEAF RUST 10 DISEASE-RESISTANCE LOCUS RECEPTOR-LIKE PROTEIN KINASE-like 1.2 from Arabidopsis thaliana (Mouse-ear cress).